The chain runs to 67 residues: Large ribosomal subunit protein uL29 (67 aa).

Belongs to the universal ribosomal protein uL29 family.

This Agathobacter rectalis (strain ATCC 33656 / DSM 3377 / JCM 17463 / KCTC 5835 / VPI 0990) (Eubacterium rectale) protein is Large ribosomal subunit protein uL29.